We begin with the raw amino-acid sequence, 325 residues long: Proto-oncogene Mas (325 aa).

Topologically, residues 1–36 (MDGSNVTSFVVEEPTNISTGRNASVGNAHRQIPIVH) are extracellular. Residues N5, N16, and N22 are each glycosylated (N-linked (GlcNAc...) asparagine). A helical membrane pass occupies residues 37 to 61 (WVIMSISPVGFVENGILLWFLCFRM). Residues 62–65 (RRNP) lie on the Cytoplasmic side of the membrane. The chain crosses the membrane as a helical span at residues 66–86 (FTVYITHLSIADISLLFCIFI). Over 87–104 (LSIDYALDYELSSGHYYT) the chain is Extracellular. A helical transmembrane segment spans residues 105 to 128 (IVTLSVTFLFGYNTGLYLLTAISV). Residues 129–149 (ERCLSVLYPIWYRCHRPKYQS) are Cytoplasmic-facing. A helical transmembrane segment spans residues 150–172 (ALVCALLWALSCLVTTMEYVMCI). The Extracellular segment spans residues 173-185 (DREEESHSRNDCR). A helical transmembrane segment spans residues 186 to 206 (AVIIFIAILSFLVFTPLMLVS). Over 207–224 (STILVVKIRKNTWASHSS) the chain is Cytoplasmic. A helical membrane pass occupies residues 225–245 (KLYIVIMVTIIIFLIFAMPMR). Residues 246–263 (LLYLLYYEYWSTFGNLHH) lie on the Extracellular side of the membrane. Residues 264–284 (ISLLFSTINSSANPFIYFFVG) traverse the membrane as a helical segment. Topologically, residues 285-325 (SSKKKRFKESLKVVLTRAFKDEMQPRRQKDNCNTVTVETVV) are cytoplasmic.

This sequence belongs to the G-protein coupled receptor 1 family. As to quaternary structure, interacts with AGTR1. Interacts with FLNA (via filamin repeat 21); increases PKA-mediated phosphorylation of FLNA.

It is found in the cell membrane. Its function is as follows. Receptor for angiotensin 1-7. Acts specifically as a functional antagonist of AGTR1 (angiotensin-2 type 1 receptor), although it up-regulates AGTR1 receptor levels. Positive regulation of AGTR1 levels occurs through activation of the G-proteins GNA11 and GNAQ, and stimulation of the protein kinase C signaling cascade. The antagonist effect on AGTR1 function is probably due to AGTR1 being physically altered by MAS1. This Homo sapiens (Human) protein is Proto-oncogene Mas (MAS1).